We begin with the raw amino-acid sequence, 241 residues long: Ribosome-recycling factor, mitochondrial (241 aa).

Belongs to the RRF family.

Its subcellular location is the mitochondrion. Functionally, necessary for protein synthesis in mitochondria. Functions as a ribosome recycling factor in mitochondria. The chain is Ribosome-recycling factor, mitochondrial (RRF1) from Kluyveromyces lactis (strain ATCC 8585 / CBS 2359 / DSM 70799 / NBRC 1267 / NRRL Y-1140 / WM37) (Yeast).